Here is a 351-residue protein sequence, read N- to C-terminus: uncharacterized protein (351 aa).

Mn(2+)-binding residues include aspartate 215, aspartate 226, histidine 290, glutamate 319, and glutamate 333.

Belongs to the peptidase M24B family. The cofactor is Mn(2+).

This is an uncharacterized protein from Staphylococcus aureus (strain bovine RF122 / ET3-1).